A 128-amino-acid polypeptide reads, in one-letter code: Large ribosomal subunit protein bL17 (128 aa).

It belongs to the bacterial ribosomal protein bL17 family. In terms of assembly, part of the 50S ribosomal subunit. Contacts protein L32.

This Edwardsiella ictaluri (strain 93-146) protein is Large ribosomal subunit protein bL17.